Consider the following 122-residue polypeptide: Holo-[acyl-carrier-protein] synthase (122 aa).

Residues Asp8 and Glu56 each coordinate Mg(2+).

It belongs to the P-Pant transferase superfamily. AcpS family. It depends on Mg(2+) as a cofactor.

It localises to the cytoplasm. It carries out the reaction apo-[ACP] + CoA = holo-[ACP] + adenosine 3',5'-bisphosphate + H(+). In terms of biological role, transfers the 4'-phosphopantetheine moiety from coenzyme A to a Ser of acyl-carrier-protein. This Alkaliphilus oremlandii (strain OhILAs) (Clostridium oremlandii (strain OhILAs)) protein is Holo-[acyl-carrier-protein] synthase.